The following is a 219-amino-acid chain: Triosephosphate isomerase (219 aa).

Residue 6–8 (NYK) participates in substrate binding. Catalysis depends on His-90, which acts as the Electrophile. The Proton acceptor role is filled by Glu-138. Residues Ile-143, Gly-178, and 199 to 200 (AS) contribute to the substrate site.

The protein belongs to the triosephosphate isomerase family. In terms of assembly, homotetramer; dimer of dimers.

The protein resides in the cytoplasm. The enzyme catalyses D-glyceraldehyde 3-phosphate = dihydroxyacetone phosphate. It functions in the pathway carbohydrate biosynthesis; gluconeogenesis. The protein operates within carbohydrate degradation; glycolysis; D-glyceraldehyde 3-phosphate from glycerone phosphate: step 1/1. Functionally, involved in the gluconeogenesis. Catalyzes stereospecifically the conversion of dihydroxyacetone phosphate (DHAP) to D-glyceraldehyde-3-phosphate (G3P). In Methanocaldococcus jannaschii (strain ATCC 43067 / DSM 2661 / JAL-1 / JCM 10045 / NBRC 100440) (Methanococcus jannaschii), this protein is Triosephosphate isomerase.